The sequence spans 289 residues: tRNA-cytidine(32) 2-sulfurtransferase (289 aa).

The PP-loop motif signature appears at 49–54 (SGGKDS). [4Fe-4S] cluster-binding residues include Cys124, Cys127, and Cys215.

Belongs to the TtcA family. Homodimer. Mg(2+) is required as a cofactor. Requires [4Fe-4S] cluster as cofactor.

Its subcellular location is the cytoplasm. It carries out the reaction cytidine(32) in tRNA + S-sulfanyl-L-cysteinyl-[cysteine desulfurase] + AH2 + ATP = 2-thiocytidine(32) in tRNA + L-cysteinyl-[cysteine desulfurase] + A + AMP + diphosphate + H(+). Its pathway is tRNA modification. In terms of biological role, catalyzes the ATP-dependent 2-thiolation of cytidine in position 32 of tRNA, to form 2-thiocytidine (s(2)C32). The sulfur atoms are provided by the cysteine/cysteine desulfurase (IscS) system. This Methylococcus capsulatus (strain ATCC 33009 / NCIMB 11132 / Bath) protein is tRNA-cytidine(32) 2-sulfurtransferase.